Consider the following 239-residue polypeptide: LRRN4 C-terminal-like protein (239 aa).

An N-terminal signal peptide occupies residues 1–19; sequence MLGSLSLLWLAAMTTSLVS. Residues 20 to 194 are Extracellular-facing; that stretch reads QPQILTLEDY…KFIMPPKPVT (175 aa). Residues 82 to 179 enclose the Fibronectin type-III domain; it reads QPEPPRLGEV…EGPENWTGPS (98 aa). N-linked (GlcNAc...) asparagine glycosylation is found at asparagine 132 and asparagine 174. A helical membrane pass occupies residues 195 to 215; the sequence is LVYAAVGVGTALALLSCAALV. At 216–239 the chain is on the cytoplasmic side; the sequence is WHFCLRERWGCPRRQGMAQASEAL.

It is found in the membrane. The polypeptide is LRRN4 C-terminal-like protein (Lrrn4cl) (Mus musculus (Mouse)).